The chain runs to 497 residues: Bifunctional protein GlmU (497 aa).

The tract at residues 1–241 (MSPETIGPAA…RWQVEGANDR (241 aa)) is pyrophosphorylase. UDP-N-acetyl-alpha-D-glucosamine is bound by residues 14-17 (LAAG), lysine 28, glutamine 81, 86-87 (GT), 112-114 (YGD), glycine 151, glutamate 166, asparagine 181, and asparagine 239. Residue aspartate 114 participates in Mg(2+) binding. Asparagine 239 contributes to the Mg(2+) binding site. Residues 242–262 (IQLSALAAEHNRRIIESWMRA) form a linker region. The tract at residues 263–497 (GVTVVDPATT…QATIEEGKQA (235 aa)) is N-acetyltransferase. UDP-N-acetyl-alpha-D-glucosamine-binding residues include arginine 344 and lysine 362. The Proton acceptor role is filled by histidine 374. UDP-N-acetyl-alpha-D-glucosamine contacts are provided by tyrosine 377 and asparagine 388. Residues 397-398 (NY), serine 416, and alanine 434 each bind acetyl-CoA.

In the N-terminal section; belongs to the N-acetylglucosamine-1-phosphate uridyltransferase family. This sequence in the C-terminal section; belongs to the transferase hexapeptide repeat family. Homotrimer. The cofactor is Mg(2+).

Its subcellular location is the cytoplasm. It catalyses the reaction alpha-D-glucosamine 1-phosphate + acetyl-CoA = N-acetyl-alpha-D-glucosamine 1-phosphate + CoA + H(+). The enzyme catalyses N-acetyl-alpha-D-glucosamine 1-phosphate + UTP + H(+) = UDP-N-acetyl-alpha-D-glucosamine + diphosphate. It functions in the pathway nucleotide-sugar biosynthesis; UDP-N-acetyl-alpha-D-glucosamine biosynthesis; N-acetyl-alpha-D-glucosamine 1-phosphate from alpha-D-glucosamine 6-phosphate (route II): step 2/2. Its pathway is nucleotide-sugar biosynthesis; UDP-N-acetyl-alpha-D-glucosamine biosynthesis; UDP-N-acetyl-alpha-D-glucosamine from N-acetyl-alpha-D-glucosamine 1-phosphate: step 1/1. It participates in bacterial outer membrane biogenesis; LPS lipid A biosynthesis. Functionally, catalyzes the last two sequential reactions in the de novo biosynthetic pathway for UDP-N-acetylglucosamine (UDP-GlcNAc). The C-terminal domain catalyzes the transfer of acetyl group from acetyl coenzyme A to glucosamine-1-phosphate (GlcN-1-P) to produce N-acetylglucosamine-1-phosphate (GlcNAc-1-P), which is converted into UDP-GlcNAc by the transfer of uridine 5-monophosphate (from uridine 5-triphosphate), a reaction catalyzed by the N-terminal domain. The protein is Bifunctional protein GlmU of Paenarthrobacter aurescens (strain TC1).